We begin with the raw amino-acid sequence, 643 residues long: Phosphomethylpyrimidine synthase (643 aa).

Substrate is bound by residues Asn-248, Met-277, Tyr-306, His-342, Ser-362 to Gly-364, Asp-403 to Arg-406, and Glu-442. Zn(2+) is bound at residue His-446. Residue Tyr-469 participates in substrate binding. His-510 contacts Zn(2+). 3 residues coordinate [4Fe-4S] cluster: Cys-590, Cys-593, and Cys-598.

It belongs to the ThiC family. As to quaternary structure, homodimer. It depends on [4Fe-4S] cluster as a cofactor.

The enzyme catalyses 5-amino-1-(5-phospho-beta-D-ribosyl)imidazole + S-adenosyl-L-methionine = 4-amino-2-methyl-5-(phosphooxymethyl)pyrimidine + CO + 5'-deoxyadenosine + formate + L-methionine + 3 H(+). It participates in cofactor biosynthesis; thiamine diphosphate biosynthesis. Functionally, catalyzes the synthesis of the hydroxymethylpyrimidine phosphate (HMP-P) moiety of thiamine from aminoimidazole ribotide (AIR) in a radical S-adenosyl-L-methionine (SAM)-dependent reaction. This chain is Phosphomethylpyrimidine synthase, found in Paraburkholderia phytofirmans (strain DSM 17436 / LMG 22146 / PsJN) (Burkholderia phytofirmans).